A 373-amino-acid polypeptide reads, in one-letter code: MDSFAAVATQLGPHFAALSNGSVVDKVTPDMAHLISPYWNQFPAMDPIWAKILTAYMIIIGMISWCGNGVVIYIFATTKSLRTPANLLVINLAISDFGIMITNTPMMGINLYFETWVLGPMMCDIYAGLGSAFGCSSIWSMCMISLDRYQVIVKGMAGRPMTIPLALGKIAYIWFMSSIWCLAPVFGWSRYVPEGNLTSCGIDYLERDWNPRSYLIFYSIFVYYIPLFLICYSYWFIIAAVSAHEKAMREQAKKMNVKSLRSSEDADKSAEGKLAKVALVTISLWFMAWTPYLVINCMGLFKFEGLTPLNTIWGACFAKSAACYNPIVYGISHPKYRLALKEKCPCCVFGKVDDGKSSEAQSQATNSEAESKA.

Residues 1 to 54 are Extracellular-facing; the sequence is MDSFAAVATQLGPHFAALSNGSVVDKVTPDMAHLISPYWNQFPAMDPIWAKILT. Asn20 carries an N-linked (GlcNAc...) asparagine glycan. Residues 55–75 traverse the membrane as a helical segment; it reads AYMIIIGMISWCGNGVVIYIF. The Cytoplasmic segment spans residues 76 to 86; the sequence is ATTKSLRTPAN. A helical transmembrane segment spans residues 87–107; sequence LLVINLAISDFGIMITNTPMM. The Extracellular portion of the chain corresponds to 108 to 124; the sequence is GINLYFETWVLGPMMCD. A disulfide bond links Cys123 and Cys200. A helical transmembrane segment spans residues 125–145; the sequence is IYAGLGSAFGCSSIWSMCMIS. The Cytoplasmic portion of the chain corresponds to 146–162; that stretch reads LDRYQVIVKGMAGRPMT. Residues 163 to 183 form a helical membrane-spanning segment; that stretch reads IPLALGKIAYIWFMSSIWCLA. Topologically, residues 184-219 are extracellular; that stretch reads PVFGWSRYVPEGNLTSCGIDYLERDWNPRSYLIFYS. N-linked (GlcNAc...) asparagine glycosylation is present at Asn196. A helical transmembrane segment spans residues 220–240; the sequence is IFVYYIPLFLICYSYWFIIAA. The Cytoplasmic segment spans residues 241–276; it reads VSAHEKAMREQAKKMNVKSLRSSEDADKSAEGKLAK. Residues 277–297 form a helical membrane-spanning segment; sequence VALVTISLWFMAWTPYLVINC. Topologically, residues 298 to 308 are extracellular; the sequence is MGLFKFEGLTP. The helical transmembrane segment at 309 to 331 threads the bilayer; that stretch reads LNTIWGACFAKSAACYNPIVYGI. Position 319 is an N6-(retinylidene)lysine (Lys319). Residues 332-373 lie on the Cytoplasmic side of the membrane; sequence SHPKYRLALKEKCPCCVFGKVDDGKSSEAQSQATNSEAESKA. Positions 354–373 are disordered; it reads DGKSSEAQSQATNSEAESKA. Over residues 358–373 the composition is skewed to polar residues; the sequence is SEAQSQATNSEAESKA.

Belongs to the G-protein coupled receptor 1 family. Opsin subfamily. Phosphorylated on some or all of the serine and threonine residues present in the C-terminal region.

It is found in the cell projection. The protein resides in the rhabdomere membrane. Functionally, visual pigments are the light-absorbing molecules that mediate vision. They consist of an apoprotein, opsin, covalently linked to cis-retinal. The polypeptide is Opsin Rh1 (ninaE) (Drosophila pseudoobscura pseudoobscura (Fruit fly)).